The chain runs to 72 residues: Large ribosomal subunit protein bL32c (72 aa).

The interval 49–72 (PPAPVSENWDDEAKGFGKDLDAAE) is disordered. Over residues 59-72 (DEAKGFGKDLDAAE) the composition is skewed to basic and acidic residues.

This sequence belongs to the bacterial ribosomal protein bL32 family.

The protein localises to the plastid. Its subcellular location is the chloroplast. The protein is Large ribosomal subunit protein bL32c of Ostreococcus tauri.